The sequence spans 187 residues: Photosystem I assembly protein Ycf4 (187 aa).

The next 2 membrane-spanning stretches (helical) occupy residues 25-45 and 69-89; these read YLWA…GISS and MSFY…TVIW.

Belongs to the Ycf4 family.

It localises to the cellular thylakoid membrane. In terms of biological role, seems to be required for the assembly of the photosystem I complex. The sequence is that of Photosystem I assembly protein Ycf4 from Trichodesmium erythraeum (strain IMS101).